The chain runs to 714 residues: Fatty acid oxidation complex subunit alpha (714 aa).

The segment at M1–P190 is enoyl-CoA hydratase. A 3-hydroxyacyl-CoA dehydrogenase region spans residues G306–T714.

The protein in the N-terminal section; belongs to the enoyl-CoA hydratase/isomerase family. In the central section; belongs to the 3-hydroxyacyl-CoA dehydrogenase family. In terms of assembly, heterotetramer of two alpha chains (FadJ) and two beta chains (FadI).

It is found in the cytoplasm. The catalysed reaction is a (3S)-3-hydroxyacyl-CoA = a (2E)-enoyl-CoA + H2O. The enzyme catalyses a 4-saturated-(3S)-3-hydroxyacyl-CoA = a (3E)-enoyl-CoA + H2O. It carries out the reaction a (3S)-3-hydroxyacyl-CoA + NAD(+) = a 3-oxoacyl-CoA + NADH + H(+). It catalyses the reaction (3S)-3-hydroxybutanoyl-CoA = (3R)-3-hydroxybutanoyl-CoA. The protein operates within lipid metabolism; fatty acid beta-oxidation. In terms of biological role, catalyzes the formation of a hydroxyacyl-CoA by addition of water on enoyl-CoA. Also exhibits 3-hydroxyacyl-CoA epimerase and 3-hydroxyacyl-CoA dehydrogenase activities. The polypeptide is Fatty acid oxidation complex subunit alpha (Klebsiella pneumoniae subsp. pneumoniae (strain ATCC 700721 / MGH 78578)).